Consider the following 334-residue polypeptide: L-lactate dehydrogenase B chain (334 aa).

Residues 30–58 (GQVG…LEDK) and arginine 100 contribute to the NAD(+) site. Substrate-binding residues include arginine 107, asparagine 139, and arginine 170. Asparagine 139 contributes to the NAD(+) binding site. Histidine 194 (proton acceptor) is an active-site residue. Threonine 249 contacts substrate.

The protein belongs to the LDH/MDH superfamily. LDH family. Homotetramer.

Its subcellular location is the cytoplasm. It catalyses the reaction (S)-lactate + NAD(+) = pyruvate + NADH + H(+). The protein operates within fermentation; pyruvate fermentation to lactate; (S)-lactate from pyruvate: step 1/1. Interconverts simultaneously and stereospecifically pyruvate and lactate with concomitant interconversion of NADH and NAD(+). This Squalus acanthias (Spiny dogfish) protein is L-lactate dehydrogenase B chain (ldhb).